A 534-amino-acid chain; its full sequence is Beta-1,2-xylosyltransferase (534 aa).

The Cytoplasmic portion of the chain corresponds to 1–11 (MSKRNPKILKI). The helical; Signal-anchor for type II membrane protein transmembrane segment at 12–34 (FLYMLLLNSLFLIIYFVFHSSSF) threads the bilayer. The Lumenal segment spans residues 35–534 (SPEQSQPPHI…LTEIMKSLGC (500 aa)). N51, N301, and N479 each carry an N-linked (GlcNAc...) asparagine glycan.

Glycosylation at least at one of the two sites Asn-51 and Asn-301 is necessary for enzyme stability and activity.

Its subcellular location is the golgi apparatus membrane. It carries out the reaction N(4)-{beta-D-GlcNAc-(1-&gt;2)-alpha-D-Man-(1-&gt;3)-[beta-D-GlcNAc-(1-&gt;2)-alpha-D-Man-(1-&gt;6)]-beta-D-Man-(1-&gt;4)-beta-D-GlcNAc-(1-&gt;4)-beta-D-GlcNAc}-L-asparaginyl-[protein] + UDP-alpha-D-xylose = N(4)-{beta-D-GlcNAc-(1-&gt;2)-alpha-D-Man-(1-&gt;3)-[beta-D-GlcNAc-(1-&gt;2)-alpha-D-Man-(1-&gt;6)]-[beta-D-Xyl-(1-&gt;2)]-beta-D-Man-(1-&gt;4)-beta-D-GlcNAc-(1-&gt;4)-beta-D-GlcNAc}-L-asparaginyl-[protein] + UDP + H(+). Its pathway is protein modification; protein glycosylation. Glycosyltransferase involved in the xylosylation of N-glycans. Possesses beta-1,2-xylosyltransferase activity, transferring xylose from UDP-xylose to the core beta-linked mannose of N-glycans. Involved in the biosynthesis of glycoprotein bound N-glycans. Does not require metal ions for its activity. The protein is Beta-1,2-xylosyltransferase of Arabidopsis thaliana (Mouse-ear cress).